We begin with the raw amino-acid sequence, 88 residues long: UPF0250 protein SO_1163 (88 aa).

It belongs to the UPF0250 family.

In Shewanella oneidensis (strain ATCC 700550 / JCM 31522 / CIP 106686 / LMG 19005 / NCIMB 14063 / MR-1), this protein is UPF0250 protein SO_1163.